A 67-amino-acid chain; its full sequence is Large ribosomal subunit protein bL32 (67 aa).

A compositionally biased stretch (basic residues) spans 1-20 (MAVPKRKMSRSNTRARRAKW). The interval 1-24 (MAVPKRKMSRSNTRARRAKWKATA) is disordered.

It belongs to the bacterial ribosomal protein bL32 family.

In Renibacterium salmoninarum (strain ATCC 33209 / DSM 20767 / JCM 11484 / NBRC 15589 / NCIMB 2235), this protein is Large ribosomal subunit protein bL32.